We begin with the raw amino-acid sequence, 93 residues long: Pyrimidine/purine nucleoside phosphorylase (93 aa).

This sequence belongs to the nucleoside phosphorylase PpnP family.

The enzyme catalyses a purine D-ribonucleoside + phosphate = a purine nucleobase + alpha-D-ribose 1-phosphate. The catalysed reaction is adenosine + phosphate = alpha-D-ribose 1-phosphate + adenine. It carries out the reaction cytidine + phosphate = cytosine + alpha-D-ribose 1-phosphate. It catalyses the reaction guanosine + phosphate = alpha-D-ribose 1-phosphate + guanine. The enzyme catalyses inosine + phosphate = alpha-D-ribose 1-phosphate + hypoxanthine. The catalysed reaction is thymidine + phosphate = 2-deoxy-alpha-D-ribose 1-phosphate + thymine. It carries out the reaction uridine + phosphate = alpha-D-ribose 1-phosphate + uracil. It catalyses the reaction xanthosine + phosphate = alpha-D-ribose 1-phosphate + xanthine. Functionally, catalyzes the phosphorolysis of diverse nucleosides, yielding D-ribose 1-phosphate and the respective free bases. Can use uridine, adenosine, guanosine, cytidine, thymidine, inosine and xanthosine as substrates. Also catalyzes the reverse reactions. The polypeptide is Pyrimidine/purine nucleoside phosphorylase (Sorangium cellulosum (strain So ce56) (Polyangium cellulosum (strain So ce56))).